The primary structure comprises 79 residues: Short neurotoxin 2 (79 aa).

An N-terminal signal peptide occupies residues 1–19 (PLLLTLVVVTIVCLDLGYT). Disulfide bonds link cysteine 22/cysteine 41, cysteine 36/cysteine 58, cysteine 60/cysteine 71, and cysteine 72/cysteine 77.

It belongs to the three-finger toxin family. Short-chain subfamily. Type I alpha-neurotoxin sub-subfamily. As to expression, expressed by the venom gland.

The protein resides in the secreted. Functionally, binds to muscle nicotinic acetylcholine receptor (nAChR) and inhibit acetylcholine from binding to the receptor, thereby impairing neuromuscular transmission. In Hydrophis cyanocinctus (Asian annulated sea snake), this protein is Short neurotoxin 2.